Reading from the N-terminus, the 214-residue chain is MSESEDDDIPQLSSHTLAALQEFYAEQKQSVNPRGDDKYNVGVIEENWQLSQFWYSQDTALRLAREAIDAAGEGGRIACVSAPSVYQKLRELCREDSSVYIFEYDRRFAIYGDEFIFYDYNHPLELPERIAAHSFDLVVADPPYLSEECLRKTSETIQFLTRGKILLCTGAIMEEQAAQLLGVKMCKFIPEHSRNLANEFRCYTNYDSGLDCEA.

Residue Ser2 is modified to N-acetylserine. Ser2 carries the phosphoserine modification.

The protein belongs to the class I-like SAM-binding methyltransferase superfamily. EFM5 family.

Its subcellular location is the cytoplasm. It carries out the reaction L-lysyl-[protein] + 3 S-adenosyl-L-methionine = N(6),N(6),N(6)-trimethyl-L-lysyl-[protein] + 3 S-adenosyl-L-homocysteine + 3 H(+). In terms of biological role, protein-lysine methyltransferase that selectively catalyzes the trimethylation of EEF1A at 'Lys-79'. The chain is EEF1A lysine methyltransferase 1 from Mus musculus (Mouse).